The sequence spans 483 residues: Aspartyl/glutamyl-tRNA(Asn/Gln) amidotransferase subunit B (483 aa).

The protein belongs to the GatB/GatE family. GatB subfamily. In terms of assembly, heterotrimer of A, B and C subunits.

It catalyses the reaction L-glutamyl-tRNA(Gln) + L-glutamine + ATP + H2O = L-glutaminyl-tRNA(Gln) + L-glutamate + ADP + phosphate + H(+). It carries out the reaction L-aspartyl-tRNA(Asn) + L-glutamine + ATP + H2O = L-asparaginyl-tRNA(Asn) + L-glutamate + ADP + phosphate + 2 H(+). Allows the formation of correctly charged Asn-tRNA(Asn) or Gln-tRNA(Gln) through the transamidation of misacylated Asp-tRNA(Asn) or Glu-tRNA(Gln) in organisms which lack either or both of asparaginyl-tRNA or glutaminyl-tRNA synthetases. The reaction takes place in the presence of glutamine and ATP through an activated phospho-Asp-tRNA(Asn) or phospho-Glu-tRNA(Gln). The polypeptide is Aspartyl/glutamyl-tRNA(Asn/Gln) amidotransferase subunit B (Rickettsia typhi (strain ATCC VR-144 / Wilmington)).